The chain runs to 205 residues: Ribonuclease HII (205 aa).

Residues 15–205 enclose the RNase H type-2 domain; sequence SRVCGIDEAG…SFKLRKLGEK (191 aa). A divalent metal cation contacts are provided by aspartate 21, glutamate 22, and aspartate 117.

Belongs to the RNase HII family. Mn(2+) serves as cofactor. The cofactor is Mg(2+).

The protein resides in the cytoplasm. It catalyses the reaction Endonucleolytic cleavage to 5'-phosphomonoester.. Functionally, endonuclease that specifically degrades the RNA of RNA-DNA hybrids. The protein is Ribonuclease HII of Chlorobaculum parvum (strain DSM 263 / NCIMB 8327) (Chlorobium vibrioforme subsp. thiosulfatophilum).